Here is a 140-residue protein sequence, read N- to C-terminus: Fluoride-specific ion channel FluC 1 (140 aa).

The next 4 membrane-spanning stretches (helical) occupy residues 3-23, 38-58, 80-100, and 113-133; these read TGAT…GAAA, APLW…GLVL, ILYP…STVM, and IAGV…ALWC. Na(+) contacts are provided by Gly91 and Thr94.

This sequence belongs to the fluoride channel Fluc/FEX (TC 1.A.43) family.

The protein localises to the cell membrane. The catalysed reaction is fluoride(in) = fluoride(out). With respect to regulation, na(+) is not transported, but it plays an essential structural role and its presence is essential for fluoride channel function. Its function is as follows. Fluoride-specific ion channel. Important for reducing fluoride concentration in the cell, thus reducing its toxicity. This Corynebacterium jeikeium (strain K411) protein is Fluoride-specific ion channel FluC 1.